A 193-amino-acid chain; its full sequence is NADPH:quinone oxidoreductase MdaB (193 aa).

FAD-binding positions include Ser-16–Thr-23, Gly-69–Met-72, Tyr-108, and Thr-124–Ala-127.

The protein belongs to the oxidoreductase MdaB family. Homodimer. FAD is required as a cofactor.

Its subcellular location is the cytoplasm. The enzyme catalyses a quinone + NADPH + H(+) = a quinol + NADP(+). Functionally, NADPH-specific quinone reductase. The sequence is that of NADPH:quinone oxidoreductase MdaB from Escherichia coli O157:H7.